The primary structure comprises 332 residues: Ketol-acid reductoisomerase (NADP(+)) 1 (332 aa).

Positions 2-182 constitute a KARI N-terminal Rossmann domain; the sequence is AELFYDADAD…GGTRAGVIKT (181 aa). NADP(+) contacts are provided by residues 25 to 28, S51, S53, and 83 to 86; these read YGSQ and DPIQ. H108 is a catalytic residue. G134 lines the NADP(+) pocket. Positions 183–328 constitute a KARI C-terminal knotted domain; it reads TFTEETETDL…KELRKLMSWV (146 aa). The Mg(2+) site is built by D191, E195, E227, and E231. S252 serves as a coordination point for substrate.

The protein belongs to the ketol-acid reductoisomerase family. The cofactor is Mg(2+).

The catalysed reaction is (2R)-2,3-dihydroxy-3-methylbutanoate + NADP(+) = (2S)-2-acetolactate + NADPH + H(+). It carries out the reaction (2R,3R)-2,3-dihydroxy-3-methylpentanoate + NADP(+) = (S)-2-ethyl-2-hydroxy-3-oxobutanoate + NADPH + H(+). Its pathway is amino-acid biosynthesis; L-isoleucine biosynthesis; L-isoleucine from 2-oxobutanoate: step 2/4. It participates in amino-acid biosynthesis; L-valine biosynthesis; L-valine from pyruvate: step 2/4. Involved in the biosynthesis of branched-chain amino acids (BCAA). Catalyzes an alkyl-migration followed by a ketol-acid reduction of (S)-2-acetolactate (S2AL) to yield (R)-2,3-dihydroxy-isovalerate. In the isomerase reaction, S2AL is rearranged via a Mg-dependent methyl migration to produce 3-hydroxy-3-methyl-2-ketobutyrate (HMKB). In the reductase reaction, this 2-ketoacid undergoes a metal-dependent reduction by NADPH to yield (R)-2,3-dihydroxy-isovalerate. The chain is Ketol-acid reductoisomerase (NADP(+)) 1 from Streptomyces coelicolor (strain ATCC BAA-471 / A3(2) / M145).